The chain runs to 187 residues: UPF0301 protein PBPRA3139 (187 aa).

Belongs to the UPF0301 (AlgH) family.

The polypeptide is UPF0301 protein PBPRA3139 (Photobacterium profundum (strain SS9)).